A 422-amino-acid chain; its full sequence is Glucose-1-phosphate adenylyltransferase (422 aa).

Alpha-D-glucose 1-phosphate-binding positions include tyrosine 110, glycine 175, glutamate 190 to lysine 191, and serine 208.

It belongs to the bacterial/plant glucose-1-phosphate adenylyltransferase family. In terms of assembly, homotetramer.

The enzyme catalyses alpha-D-glucose 1-phosphate + ATP + H(+) = ADP-alpha-D-glucose + diphosphate. Its pathway is glycan biosynthesis; glycogen biosynthesis. Its function is as follows. Involved in the biosynthesis of ADP-glucose, a building block required for the elongation reactions to produce glycogen. Catalyzes the reaction between ATP and alpha-D-glucose 1-phosphate (G1P) to produce pyrophosphate and ADP-Glc. The chain is Glucose-1-phosphate adenylyltransferase from Hydrogenovibrio crunogenus (strain DSM 25203 / XCL-2) (Thiomicrospira crunogena).